The primary structure comprises 1992 residues: E3 ubiquitin-protein ligase TRIP12 (1992 aa).

Polar residues predominate over residues 1-10 (MSNRPNNNPG). Residues 1–398 (MSNRPNNNPG…SGESESDDSE (398 aa)) are disordered. The residue at position 2 (S2) is an N-acetylserine. The residue at position 12 (S12) is a Phosphoserine. The span at 18-27 (RNTAGAQPQD) shows a compositional bias: polar residues. A compositionally biased stretch (low complexity) spans 29 to 43 (SIGGRSCSSSSVVIV). The span at 48–70 (DPDRANTSEKQKTGQVPKKDNSR) shows a compositional bias: basic and acidic residues. Phosphoserine is present on residues S77, S85, and S100. The span at 78–88 (PDYNRTNSPSS) shows a compositional bias: polar residues. The span at 154-164 (SSCIKSASVSE) shows a compositional bias: polar residues. Composition is skewed to low complexity over residues 175-188 (PTKLASKSAASAKA) and 196-215 (SSSAASTSSSSSAVASASSA). K181 carries the N6-acetyllysine modification. Residues 280-290 (PGSSKSETSKP) show a composition bias toward polar residues. 2 positions are modified to phosphoserine: S310 and S312. Positions 330–339 (GSCASASRRG) are enriched in low complexity. Positions 346 to 358 (GAAEARRQEKMAD) are enriched in basic and acidic residues. The segment covering 362–371 (NQETVNSSAA) has biased composition (polar residues). The region spanning 749–836 (MLKKGNAQNT…DPELAKSFIK (88 aa)) is the WWE domain. The segment at 938–1044 (SLLTSPPKAC…QSPKSSFLAS (107 aa)) is disordered. S942 carries the phosphoserine modification. Positions 948-960 (TNGSGSLGSTPSV) are enriched in polar residues. The span at 961–973 (NSGTATAATNASA) shows a compositional bias: low complexity. A phosphoserine mark is found at S991 and S997. Over residues 1001–1014 (KRKRLPKRGSRRPK) the composition is skewed to basic residues. Residue S1016 is modified to Phosphoserine. Over residues 1017 to 1026 (PPRDDDKVDN) the composition is skewed to basic and acidic residues. A compositionally biased stretch (low complexity) spans 1029 to 1040 (KSPTTTQSPKSS). 5 positions are modified to phosphoserine: S1030, S1317, S1322, S1329, and S1376. At T1377 the chain carries Phosphothreonine. Disordered regions lie at residues 1407–1434 (SNKDCVGGKRGRAQTAPTKTSPRNAKKH) and 1568–1587 (TNPEINQSDSQDSRVAPRLD). K1425 carries the N6-acetyllysine modification. A Phosphoserine modification is found at S1427. The segment at 1496-1570 (EIIPTSEFIN…AMQRLLDTNP (75 aa)) is K-box. Residues 1885 to 1992 (PDHGYTHDSR…REGQQSFHLS (108 aa)) enclose the HECT domain. Catalysis depends on C1959, which acts as the Glycyl thioester intermediate.

The protein belongs to the UPL family. K-HECT subfamily. Interacts with MYC; leading to disrupt interaction with isoform p19ARF/ARF of CDKN2A. Interacts with TRADD; leading to disrupt interaction with isoform p19ARF/ARF of CDKN2A. Interacts with SMARCC1; leading to disrupt interaction with SMARCE1.

The protein localises to the nucleus. It is found in the nucleoplasm. It catalyses the reaction S-ubiquitinyl-[E2 ubiquitin-conjugating enzyme]-L-cysteine + [acceptor protein]-L-lysine = [E2 ubiquitin-conjugating enzyme]-L-cysteine + N(6)-ubiquitinyl-[acceptor protein]-L-lysine.. Its pathway is protein modification; protein ubiquitination. E3 ubiquitin-protein ligase involved in ubiquitin fusion degradation (UFD) pathway and regulation of DNA repair. Part of the ubiquitin fusion degradation (UFD) pathway, a process that mediates ubiquitination of protein at their N-terminus, regardless of the presence of lysine residues in target proteins. Acts as a key regulator of DNA damage response by acting as a suppressor of RNF168, an E3 ubiquitin-protein ligase that promotes accumulation of 'Lys-63'-linked histone H2A and H2AX at DNA damage sites, thereby acting as a guard against excessive spreading of ubiquitinated chromatin at damaged chromosomes. In normal cells, mediates ubiquitination and degradation of isoform p19ARF/ARF of CDKN2A, a lysine-less tumor suppressor required for p53/TP53 activation under oncogenic stress. In cancer cells, however, isoform p19ARF/ARF and TRIP12 are located in different cell compartments, preventing isoform p19ARF/ARF ubiquitination and degradation. Does not mediate ubiquitination of isoform p16-INK4a of CDKN2A. Also catalyzes ubiquitination of NAE1 and SMARCE1, leading to their degradation. Ubiquitination and degradation of target proteins is regulated by interaction with proteins such as MYC, TRADD or SMARCC1, which disrupt the interaction between TRIP12 and target proteins. Mediates ubiquitination of ASXL1: following binding to N(6)-methyladenosine methylated DNA, ASXL1 is ubiquitinated by TRIP12, leading to its degradation and subsequent inactivation of the PR-DUB complex. In Bos taurus (Bovine), this protein is E3 ubiquitin-protein ligase TRIP12 (TRIP12).